The chain runs to 315 residues: Glycine--tRNA ligase alpha subunit (315 aa).

This sequence belongs to the class-II aminoacyl-tRNA synthetase family. In terms of assembly, tetramer of two alpha and two beta subunits.

It is found in the cytoplasm. The enzyme catalyses tRNA(Gly) + glycine + ATP = glycyl-tRNA(Gly) + AMP + diphosphate. The chain is Glycine--tRNA ligase alpha subunit from Pseudomonas aeruginosa (strain LESB58).